A 624-amino-acid chain; its full sequence is Probable potassium transport system protein Kup 1 (624 aa).

The next 12 membrane-spanning stretches (helical) occupy residues 10–30, 48–68, 94–114, 133–153, 159–179, 210–230, 242–262, 270–290, 331–351, 363–383, 388–408, and 413–433; these read LALGALGIVFGDIGTSPLYAL, LSLIFWSLIIVVSFKYLMIIF, PVFYIVAIFGAGLLLGDGMLT, LYPYVLPIASLILVLLFSLQA, IGYLFGPLILIWFITIAILGI, FLLGGIFLVVTGGEALFADIG, FFIALPCLLLNYFGQGANLIV, PFFMIAPPWFYLPLIIIATVA, IYVPQINFILFIGTMAFCLAF, IAVNLEMLLVDAMVAYAAVSI, TFNVIFLFGLFLLIDLAFLGA, and FITGGWVPIVLAFFIAFIMYS.

Belongs to the HAK/KUP transporter (TC 2.A.72) family.

It localises to the cell inner membrane. It carries out the reaction K(+)(in) + H(+)(in) = K(+)(out) + H(+)(out). Functionally, transport of potassium into the cell. Likely operates as a K(+):H(+) symporter. The protein is Probable potassium transport system protein Kup 1 of Legionella pneumophila (strain Paris).